The following is a 499-amino-acid chain: Serine/threonine-protein phosphatase 5 (499 aa).

The disordered stretch occupies residues 1–23; that stretch reads MAMAEGERTECAEPPRDEPPADG. Position 2 is an N-acetylalanine (alanine 2). TPR repeat units follow at residues 28–61, 62–95, and 96–129; these read AEEL…NPSN, AIYY…DKKY, and IKGY…KPHD. The segment at 184 to 499 is catalytic; that stretch reads GKVTISFMKE…ANTLLQLGMM (316 aa). Mn(2+) is bound by residues aspartate 242, histidine 244, and aspartate 271. Histidine 244 is a substrate binding site. Substrate is bound by residues arginine 275 and 303–304; that span reads NH. Asparagine 303 serves as a coordination point for Mn(2+). The Proton donor/acceptor role is filled by histidine 304. Histidine 352 serves as a coordination point for Mn(2+). Substrate-binding residues include arginine 400 and histidine 427. Histidine 427 contacts Mn(2+). Residues 495 to 499 form a required for autoinhibition region; it reads QLGMM.

This sequence belongs to the PPP phosphatase family. PP-5 (PP-T) subfamily. As to quaternary structure, probably forms a complex composed of chaperones HSP90 and HSP70, co-chaperones STIP1/HOP, CDC37, PPP5C, PTGES3/p23, TSC1 and client protein TSC2. Probably forms a complex composed of chaperones HSP90 and HSP70, co-chaperones CDC37, PPP5C, TSC1 and client protein TSC2, CDK4, AKT, RAF1 and NR3C1; this complex does not contain co-chaperones STIP1/HOP and PTGES3/p23. Part of a complex with HSP90/HSP90AA1 and steroid receptors. Interacts (via TPR repeats) with HSP90AA1 (via TPR repeat-binding motif) or HSPA1A/HSPA1B; the interaction is direct and activates the phosphatase activity. Dissociates from HSPA1A/HSPA1B and HSP90AA1 in response to arachidonic acid. Interacts with CPNE1 (via VWFA domain). Interacts with CDC16, CDC27. Interacts with KLHDC10 (via the 6 Kelch repeats); inhibits the phosphatase activity on MAP3K5. Interacts with ATM and ATR; both interactions are induced by DNA damage and enhance ATM and ATR kinase activity. Interacts with RAD17; reduced by DNA damage. Interacts with nuclear receptors such as NR3C1/GCR and PPARG (activated by agonist); regulates their transactivation activities. Interacts (via TPR repeats) with S100 proteins S100A1, S100A2, S100A6, S100B and S100P; the interactions are calcium-dependent, strongly activate PPP5C phosphatase activity and compete with HSP90AA1 and MAP3K5 interactions. Interacts with SMAD2 and SMAD3 but not with SMAD1; decreases SMAD3 phosphorylation and protein levels. Interacts (via TPR repeats) with CRY1 and CRY2; the interaction with CRY2 down-regulates the phosphatase activity on CSNK1E. Interacts (via TPR repeats) with the active form of RAC1, GNA12 or GNA13; these interactions activate the phosphatase activity and translocate PPP5C to the cell membrane. Interacts with FLCN. Mg(2+) serves as cofactor. Mn(2+) is required as a cofactor. In terms of processing, activated by at least two different proteolytic cleavages producing a 56 kDa and a 50 kDa form. As to expression, ubiquitous.

Its subcellular location is the nucleus. The protein localises to the cytoplasm. The protein resides in the cell membrane. The catalysed reaction is O-phospho-L-seryl-[protein] + H2O = L-seryl-[protein] + phosphate. The enzyme catalyses O-phospho-L-threonyl-[protein] + H2O = L-threonyl-[protein] + phosphate. Autoinhibited. In the autoinhibited state, the TPR domain interacts with the catalytic region and prevents substrate access to the catalytic pocket. Allosterically activated by various polyunsaturated fatty acids, free long-chain fatty-acids and long-chain fatty acyl-CoA esters, arachidonic acid being the most effective activator. HSP90A and probably RAC1, GNA12 and GNA13 can also release the autoinhibition by the TPR repeat. Activation by RAC1, GNA12 and GNA13 is synergistic with the one produced by fatty acids binding. Inhibited by okadaic acid. Its function is as follows. Serine/threonine-protein phosphatase that dephosphorylates a myriad of proteins involved in different signaling pathways including the kinases CSNK1E, ASK1/MAP3K5, PRKDC and RAF1, the nuclear receptors NR3C1, PPARG, ESR1 and ESR2, SMAD proteins and TAU/MAPT. Implicated in wide ranging cellular processes, including apoptosis, differentiation, DNA damage response, cell survival, regulation of ion channels or circadian rhythms, in response to steroid and thyroid hormones, calcium, fatty acids, TGF-beta as well as oxidative and genotoxic stresses. Participates in the control of DNA damage response mechanisms such as checkpoint activation and DNA damage repair through, for instance, the regulation ATM/ATR-signaling and dephosphorylation of PRKDC and TP53BP1. Inhibits ASK1/MAP3K5-mediated apoptosis induced by oxidative stress. Plays a positive role in adipogenesis, mainly through the dephosphorylation and activation of PPARG transactivation function. Also dephosphorylates and inhibits the anti-adipogenic effect of NR3C1. Regulates the circadian rhythms, through the dephosphorylation and activation of CSNK1E. May modulate TGF-beta signaling pathway by the regulation of SMAD3 phosphorylation and protein expression levels. Dephosphorylates and may play a role in the regulation of TAU/MAPT. Through their dephosphorylation, may play a role in the regulation of ions channels such as KCNH2. Dephosphorylate FNIP1, disrupting interaction with HSP90AA1/Hsp90. This chain is Serine/threonine-protein phosphatase 5 (PPP5C), found in Homo sapiens (Human).